We begin with the raw amino-acid sequence, 104 residues long: NADH-quinone oxidoreductase subunit K (104 aa).

3 helical membrane-spanning segments follow: residues 4 to 24 (VPLSVYLVLALILFCIGLYGA), 31 to 51 (VIVLICIELMLNAVNINLVAF), and 64 to 84 (IFALFTITVAAAEAAVGLAIL).

Belongs to the complex I subunit 4L family. In terms of assembly, NDH-1 is composed of 14 different subunits. Subunits NuoA, H, J, K, L, M, N constitute the membrane sector of the complex.

The protein localises to the cell membrane. The enzyme catalyses a quinone + NADH + 5 H(+)(in) = a quinol + NAD(+) + 4 H(+)(out). Functionally, NDH-1 shuttles electrons from NADH, via FMN and iron-sulfur (Fe-S) centers, to quinones in the respiratory chain. The immediate electron acceptor for the enzyme in this species is believed to be a menaquinone. Couples the redox reaction to proton translocation (for every two electrons transferred, four hydrogen ions are translocated across the cytoplasmic membrane), and thus conserves the redox energy in a proton gradient. The sequence is that of NADH-quinone oxidoreductase subunit K from Geobacillus sp. (strain WCH70).